The primary structure comprises 629 residues: Probable potassium transport system protein Kup 3 (629 aa).

The next 12 membrane-spanning stretches (helical) occupy residues 20–40 (LSLSALGIVYGDIGTSPLYTF), 54–74 (VTTIMGSASLIIWTLIIIASV), 106–126 (PFIIAVGLMGAALIYGDGTIT), 143–163 (PSLKYYVLPIAITILITLFAI), 171–191 (IGKAFGPVMAFWFLTIGILGA), 212–232 (FLFSNGATGFFILCGVFLCAT), 253–273 (WFGLAFPSLIFNYLGQAALVL), 291–311 (FLLPLIILSTVATIIASQAII), 343–363 (IYIGVVNWLLMLATLGLIIGF), 372–392 (AYGIAVSATMLCTTVLLFIAL), 400–420 (IITSGLVAGLFMIVDASFFAA), and 425–445 (FINGGYIPITLAIIIYSMMYI).

Belongs to the HAK/KUP transporter (TC 2.A.72) family.

It localises to the cell inner membrane. It carries out the reaction K(+)(in) + H(+)(in) = K(+)(out) + H(+)(out). Functionally, transport of potassium into the cell. Likely operates as a K(+):H(+) symporter. The sequence is that of Probable potassium transport system protein Kup 3 from Legionella pneumophila (strain Paris).